A 350-amino-acid chain; its full sequence is Pleckstrin (350 aa).

The PH 1 domain occupies 4–101 (KRIREGYLVK…WVRDIKKAIK (98 aa)). Position 64 is an N6-acetyllysine (Lys64). A phosphoserine mark is found at Ser113 and Ser117. The DEP domain maps to 136–221 (PEKGIKELNL…SPDAFYYFPD (86 aa)). The PH 2 domain occupies 244–347 (VIIKQGCLLK…WIKAIQVASR (104 aa)).

Functionally, major protein kinase C substrate of platelets. This is Pleckstrin (Plek) from Mus musculus (Mouse).